A 595-amino-acid chain; its full sequence is Threonine dehydratase 2 biosynthetic, chloroplastic (595 aa).

The N-terminal 51 residues, 1-51, are a transit peptide targeting the chloroplast; that stretch reads MEFLCLAPTRSFSTNPKLTKSIPSDHTSTTSRIFTYQNMRGSTMRPLALPL. Residue lysine 143 is modified to N6-(pyridoxal phosphate)lysine. ACT-like domains are found at residues 420-492 and 514-585; these read ALLA…NLSH and IFGE…LDNY.

It belongs to the serine/threonine dehydratase family. As to quaternary structure, homotetramer. It depends on pyridoxal 5'-phosphate as a cofactor. Proteolytically cleaved by a chymotrypsin-like digestive protease in the midgut of the lepidopteran insects to remove the C-terminal regulatory domain, which allows efficient metabolizing of threonine in the presence of high isoleucine levels in the gut. As to expression, expressed in floral buds, 8-9 mm long flowers 1 to 2 days before anthesis, open flowers and floral organs including sepals, petals, stamens and carpels of 8-9 mm flowers (at protein level). Expressed in very early floral meristems of the anantha. Over 500-fold expression in mature flowers compared to leaves. Expressed in sepals, petals, stamens and carpels of the mature flower. In sepals, mostly expressed in the abaxial mesophyll cells and in petals in parenchymal cells. Not expressed in epidermal or vascular tissues of sepals and petals. In stamens, expressed in parenchymal cells of the connective and lobes, but not expressed in differentiated tissues such as tapetum (TP), stomium (SM), or pollen grains (PG). Not expressed in roots or seeds. High level of expression in immature flower buds, unopened flowers and opened flowers. Not expressed in unstressed leaves, root, stem or petiole.

Its subcellular location is the plastid. It localises to the chloroplast. It carries out the reaction L-threonine = 2-oxobutanoate + NH4(+). It catalyses the reaction L-serine = pyruvate + NH4(+). Its pathway is amino-acid biosynthesis; L-isoleucine biosynthesis; 2-oxobutanoate from L-threonine: step 1/1. With respect to regulation, threonine dehydratase 2 biosynthetic, chloroplastic: Strongly inhibited by 1 mM isoleucine. Processed threonine dehydratase 2: Not inhibited by isoleucine. Not required for normal growth and development of the plant. Its function is as follows. Involved in defense against lepidopteran, but not coleopteran herbivore insects. Acts in the insect gut to degrade threonine, which is an essential and limiting nutrient for the growth of lepidopteran larvae. Active against both L-threonine and L-serine. The protein is Threonine dehydratase 2 biosynthetic, chloroplastic of Solanum lycopersicum (Tomato).